Reading from the N-terminus, the 382-residue chain is Hyaluronidase (382 aa).

The or 24 signal peptide spans 1 to 28 (MSRPLVITEGMMIGVLLMLAPINALLLG). Residues 29-33 (FVQST) constitute a propeptide that is removed on maturation. 2 cysteine pairs are disulfide-bonded: Cys54–Cys345 and Cys221–Cys233. Asn115 carries N-linked (GlcNAc...) asparagine glycosylation. Residue Glu145 is the Proton donor of the active site. An N-linked (GlcNAc...) (complex) asparagine glycan is attached at Asn263.

Belongs to the glycosyl hydrolase 56 family. Homotetramer. In terms of processing, N-glycosylated. Glycans found include a majority of small oligosaccharides (Man1-3GlcNAc2), most of which are either alpha 1,3-monofucosylated or alpha 1,3-(alpha 1,6-)difucosylated at the innermost GlcNAc residue, approximately 5% of high-mannose type structures, and 8% contains the terminal trisaccharide GalNAc beta 1-4[Fuc alpha 1-3]GlcNAc beta 1-in beta 1,2-linkage to the core alpha 1,3-mannosyl residue. Expressed in the venom glands of worker bees. It is also detected in the testes of drones but not in the queen-bee venom glands or in pupae.

Its subcellular location is the secreted. It carries out the reaction Random hydrolysis of (1-&gt;4)-linkages between N-acetyl-beta-D-glucosamine and D-glucuronate residues in hyaluronate.. In terms of biological role, hydrolyzes high molecular weight hyaluronic acid to produce small oligosaccharides. This is Hyaluronidase from Apis mellifera (Honeybee).